Consider the following 96-residue polypeptide: UPF0235 protein YggU (96 aa).

Belongs to the UPF0235 family.

This chain is UPF0235 protein YggU, found in Escherichia coli O157:H7.